The following is a 443-amino-acid chain: Structure-specific endonuclease subunit SLX1 homolog (443 aa).

Residues 1-27 (METFILSSDSDDDSGPPPSKRRTIEGI) are disordered. Residues 171 to 258 (EFYGVYCLIS…PLVSKSLKEK (88 aa)) form the GIY-YIG domain. The SLX1-type zinc finger occupies 340–395 (CRICGKDIEKLWSLVRCISATCPSHFHSKCLSENGLKLKNEHVDHVYPLKANCPTC).

This sequence belongs to the SLX1 family. Forms a heterodimer with him-18/slx-4. The cofactor is a divalent metal cation.

Its subcellular location is the nucleus. Its function is as follows. Catalytic subunit of a heterodimeric structure-specific endonuclease that resolves DNA secondary structures generated during DNA repair and recombination. Has endonuclease activity towards branched DNA substrates, introducing single-strand cuts in duplex DNA close to junctions with ss-DNA (Potential). Has a preference for replication forks over 5' flap structures or Holliday junctions and shows much lower activity toward 3' flap structures. Required for proper crossover distribution through inhibition of crossover formation at the central region of chromosomes. The sequence is that of Structure-specific endonuclease subunit SLX1 homolog from Caenorhabditis elegans.